We begin with the raw amino-acid sequence, 762 residues long: Phosphoribosylformylglycinamidine synthase subunit PurL (762 aa).

H58 is a catalytic residue. Positions 61 and 105 each coordinate ATP. Mg(2+) is bound at residue E107. Residues 108–111 (SHNH) and R130 contribute to the substrate site. H109 (proton acceptor) is an active-site residue. D131 lines the Mg(2+) pocket. Residue Q260 participates in substrate binding. D288 lines the Mg(2+) pocket. 332-334 (ESQ) provides a ligand contact to substrate. ATP contacts are provided by N520 and G557. N558 serves as a coordination point for Mg(2+). Position 560 (S560) interacts with substrate.

This sequence belongs to the FGAMS family. In terms of assembly, monomer. Part of the FGAM synthase complex composed of 1 PurL, 1 PurQ and 2 PurS subunits.

The protein resides in the cytoplasm. The enzyme catalyses N(2)-formyl-N(1)-(5-phospho-beta-D-ribosyl)glycinamide + L-glutamine + ATP + H2O = 2-formamido-N(1)-(5-O-phospho-beta-D-ribosyl)acetamidine + L-glutamate + ADP + phosphate + H(+). It functions in the pathway purine metabolism; IMP biosynthesis via de novo pathway; 5-amino-1-(5-phospho-D-ribosyl)imidazole from N(2)-formyl-N(1)-(5-phospho-D-ribosyl)glycinamide: step 1/2. Part of the phosphoribosylformylglycinamidine synthase complex involved in the purines biosynthetic pathway. Catalyzes the ATP-dependent conversion of formylglycinamide ribonucleotide (FGAR) and glutamine to yield formylglycinamidine ribonucleotide (FGAM) and glutamate. The FGAM synthase complex is composed of three subunits. PurQ produces an ammonia molecule by converting glutamine to glutamate. PurL transfers the ammonia molecule to FGAR to form FGAM in an ATP-dependent manner. PurS interacts with PurQ and PurL and is thought to assist in the transfer of the ammonia molecule from PurQ to PurL. The sequence is that of Phosphoribosylformylglycinamidine synthase subunit PurL from Rhodococcus erythropolis (strain PR4 / NBRC 100887).